A 199-amino-acid chain; its full sequence is Oligoribonuclease (199 aa).

The Exonuclease domain maps to 5-170 (LVWIDCEMTG…ADIRESIREL (166 aa)). Residue tyrosine 127 is part of the active site.

This sequence belongs to the oligoribonuclease family.

It localises to the cytoplasm. In terms of biological role, 3'-to-5' exoribonuclease specific for small oligoribonucleotides. The protein is Oligoribonuclease of Rhodococcus jostii (strain RHA1).